The sequence spans 36 residues: U4-ctenitoxin-Pr1a (36 aa).

3 cysteine pairs are disulfide-bonded: Cys3–Cys17, Cys10–Cys22, and Cys16–Cys34.

Expressed by the venom gland.

The protein localises to the secreted. Neurotoxin. Causes spastic paralysis and death in mice. Moderate inhibitor of L-type calcium channels (Cav1/CACNA1). This is U4-ctenitoxin-Pr1a from Phoneutria reidyi (Brazilian Amazonian armed spider).